Here is a 431-residue protein sequence, read N- to C-terminus: MLTIKNWQLLSENDKKLCLSRPRQSSAIKENVLEIINQVQLSGDKALYDLTKQFDRVNLQYLQVPQETIEQANIPQNALNAITQAIGTISSYHQSLLPENTEISTASGITIRNVYRPIQKVGLYVPGGNKTPLVSSLLMQAIPAKVAGCPIKVLCTPPDAEGEINEHILVAARLCGIDTIYAIGGAQAIAAMAYGTESVIKVDKIFGPGNSYVTQAKTLVAIDANGAAIDMPAGPSEVMILADTEANSEFIAADLLAQAEHGPDSQVILICDECELANQVNQQLEIQMSYLSRIEFIKQSLANSRIIICSNQSEQLDIINSYAPEHLIINRKNPESWVEKIVAAGTVFLGSWAAETMGDYVTGSNHVLPTNGFARNHSGLSTLDFMTRFTVQAINQEAICNLGPAAMALAELEGLDAHANAVQIRLNTLGD.

NAD(+)-binding residues include Tyr124, Gln187, and Asn210. Positions 236, 258, and 261 each coordinate substrate. Zn(2+)-binding residues include Gln258 and His261. Active-site proton acceptor residues include Glu325 and His326. The substrate site is built by His326, Asp359, Glu413, and His418. Asp359 contributes to the Zn(2+) binding site. His418 lines the Zn(2+) pocket.

It belongs to the histidinol dehydrogenase family. Requires Zn(2+) as cofactor.

The catalysed reaction is L-histidinol + 2 NAD(+) + H2O = L-histidine + 2 NADH + 3 H(+). Its pathway is amino-acid biosynthesis; L-histidine biosynthesis; L-histidine from 5-phospho-alpha-D-ribose 1-diphosphate: step 9/9. Catalyzes the sequential NAD-dependent oxidations of L-histidinol to L-histidinaldehyde and then to L-histidine. The polypeptide is Histidinol dehydrogenase (Legionella pneumophila (strain Lens)).